A 412-amino-acid chain; its full sequence is Histidinol dehydrogenase (412 aa).

3 residues coordinate NAD(+): Y118, Q176, and N199. Substrate contacts are provided by T222, Q244, and H247. Positions 244 and 247 each coordinate Zn(2+). Residues E311 and H312 each act as proton acceptor in the active site. Residues H312, D345, E399, and H404 each contribute to the substrate site. A Zn(2+)-binding site is contributed by D345. Zn(2+) is bound at residue H404.

It belongs to the histidinol dehydrogenase family. Zn(2+) serves as cofactor.

The enzyme catalyses L-histidinol + 2 NAD(+) + H2O = L-histidine + 2 NADH + 3 H(+). Its pathway is amino-acid biosynthesis; L-histidine biosynthesis; L-histidine from 5-phospho-alpha-D-ribose 1-diphosphate: step 9/9. In terms of biological role, catalyzes the sequential NAD-dependent oxidations of L-histidinol to L-histidinaldehyde and then to L-histidine. The polypeptide is Histidinol dehydrogenase (Thermus thermophilus (strain ATCC BAA-163 / DSM 7039 / HB27)).